A 400-amino-acid polypeptide reads, in one-letter code: CCA-adding enzyme (400 aa).

Positions 28 and 31 each coordinate ATP. The CTP site is built by Gly28 and Arg31. Residues Asp41 and Asp43 each coordinate Mg(2+). ATP-binding residues include Arg112, Asp155, Arg158, Arg161, and Arg164. Residues Arg112, Asp155, Arg158, Arg161, and Arg164 each coordinate CTP.

It belongs to the tRNA nucleotidyltransferase/poly(A) polymerase family. Bacterial CCA-adding enzyme type 3 subfamily. As to quaternary structure, homodimer. Mg(2+) serves as cofactor.

The enzyme catalyses a tRNA precursor + 2 CTP + ATP = a tRNA with a 3' CCA end + 3 diphosphate. It carries out the reaction a tRNA with a 3' CCA end + 2 CTP + ATP = a tRNA with a 3' CCACCA end + 3 diphosphate. Catalyzes the addition and repair of the essential 3'-terminal CCA sequence in tRNAs without using a nucleic acid template. Adds these three nucleotides in the order of C, C, and A to the tRNA nucleotide-73, using CTP and ATP as substrates and producing inorganic pyrophosphate. tRNA 3'-terminal CCA addition is required both for tRNA processing and repair. Also involved in tRNA surveillance by mediating tandem CCA addition to generate a CCACCA at the 3' terminus of unstable tRNAs. While stable tRNAs receive only 3'-terminal CCA, unstable tRNAs are marked with CCACCA and rapidly degraded. This chain is CCA-adding enzyme, found in Staphylococcus aureus (strain MSSA476).